The sequence spans 131 residues: DNA-binding protein inhibitor ID-4 (131 aa).

The 53-residue stretch at 36 to 88 (ARYKMEEEETLCLQYDMNDCYSRLKRLVPTIPPNKKVSKVEILQHVIDYILDL) folds into the bHLH domain.

As to quaternary structure, heterodimer with other HLH proteins. In terms of tissue distribution, during embryonic development, expressed in a number of neural tissues, including Rohon-Beard neurons, olfactory placode, eye primordia, and the trigeminal ganglia. Also expressed in other organs including the pronephros and liver primordium. Pronephric development begins by stage 25 and increases during tailbud stages. Expressed in both the tubules and the duct. As embryogenesis progresses, expressed in the migrating melanocytes and lateral line structures.

It is found in the nucleus. Its function is as follows. Transcriptional regulator (lacking a basic DNA binding domain) which negatively regulates the basic helix-loop-helix (bHLH) transcription factors by forming heterodimers and inhibiting their DNA binding and transcriptional activity. Inhibits the activity of both neurogenic (neurog1/neurogenin, neurod1/neuroD) and myogenic (myod1/myoD) bHLH factors. This Xenopus laevis (African clawed frog) protein is DNA-binding protein inhibitor ID-4.